The primary structure comprises 431 residues: MNSHYQNHSLENFFSTNLSATDDAVFAGIQAEFTRQNEQIELIASENIVSKAVMQAQGTCLTNKYAEGYPGRRYYGGCEHVDTVEAIAIERAKKLFNCEYANVQPHSGAQANGAVKLALLQPGDTIMGMSLDAGGHLTHGARPALSGKWFNAVQYGVDKETLEINYDDVRALAVEHKPKMIIAGGSAIPRVIDFAKFREIADEVGAILMVDMAHIAGLIATGAHPSPLPHAHVVTTTTHKTLRGPRGGMILTNHEEIIKKINSAVFPGLQGGPLMHVIAAKAVAFGEALGPEFKTYIDSVINNAKVLAEVLQTRGCDIVTGGTDTHLMLVDLRPKGLKGNKAEEALERAGITCNKNGIPFDTEKPMITSGVRLGTPAGTSRGFGAEEFKLIGHWIGDVLDGLVENPEGNAEVEQRVRKEVKALCSRFPLYQ.

(6S)-5,6,7,8-tetrahydrofolate is bound by residues Leu-131 and 135-137 (GHL). Lys-240 carries the post-translational modification N6-(pyridoxal phosphate)lysine. Glu-256 is a (6S)-5,6,7,8-tetrahydrofolate binding site.

This sequence belongs to the SHMT family. In terms of assembly, homodimer. Pyridoxal 5'-phosphate is required as a cofactor.

It is found in the cytoplasm. The enzyme catalyses (6R)-5,10-methylene-5,6,7,8-tetrahydrofolate + glycine + H2O = (6S)-5,6,7,8-tetrahydrofolate + L-serine. It participates in one-carbon metabolism; tetrahydrofolate interconversion. The protein operates within amino-acid biosynthesis; glycine biosynthesis; glycine from L-serine: step 1/1. In terms of biological role, catalyzes the reversible interconversion of serine and glycine with tetrahydrofolate (THF) serving as the one-carbon carrier. This reaction serves as the major source of one-carbon groups required for the biosynthesis of purines, thymidylate, methionine, and other important biomolecules. Also exhibits THF-independent aldolase activity toward beta-hydroxyamino acids, producing glycine and aldehydes, via a retro-aldol mechanism. The sequence is that of Serine hydroxymethyltransferase 2 from Vibrio vulnificus (strain YJ016).